Reading from the N-terminus, the 519-residue chain is Glutamate--cysteine ligase (519 aa).

The protein belongs to the glutamate--cysteine ligase type 1 family. Type 1 subfamily.

It carries out the reaction L-cysteine + L-glutamate + ATP = gamma-L-glutamyl-L-cysteine + ADP + phosphate + H(+). The protein operates within sulfur metabolism; glutathione biosynthesis; glutathione from L-cysteine and L-glutamate: step 1/2. The chain is Glutamate--cysteine ligase from Erwinia tasmaniensis (strain DSM 17950 / CFBP 7177 / CIP 109463 / NCPPB 4357 / Et1/99).